The sequence spans 147 residues: Bis(5'-nucleosyl)-tetraphosphatase [asymmetrical] (147 aa).

Position 2 is an N-acetylalanine (Ala-2). Residues 2–139 (ALRACGLIIF…DMKAVLQEGH (138 aa)) enclose the Nudix hydrolase domain. A Nudix box motif is present at residues 43–64 (GHVEPGESDLQTALRETQEEAG).

The protein belongs to the Nudix hydrolase family. The cofactor is a divalent metal cation.

It carries out the reaction P(1),P(4)-bis(5'-guanosyl) tetraphosphate + H2O = GMP + GTP + 2 H(+). It catalyses the reaction a 5'-end CoA-ribonucleoside in mRNA + H2O = a 5'-end phospho-adenosine-phospho-ribonucleoside in mRNA + (R)-4'-phosphopantetheine + 2 H(+). The enzyme catalyses a 5'-end FAD-phospho-ribonucleoside in mRNA + H2O = a 5'-end phospho-adenosine-phospho-ribonucleoside in mRNA + FMN + 2 H(+). Its activity is regulated as follows. Inhibited by fluoride ions. Catalyzes the asymmetric hydrolysis of diadenosine 5',5'''-P1,P4-tetraphosphate (Ap4A) to yield AMP and ATP. Exhibits decapping activity towards FAD-capped RNAs and dpCoA-capped RNAs in vitro. The protein is Bis(5'-nucleosyl)-tetraphosphatase [asymmetrical] (NUDT2) of Sus scrofa (Pig).